The chain runs to 757 residues: MDVNPTLLFLKVPAQNAISTTFPYTGDPPYSHGTGTGYTMDTVNRTHQYSERGRWTKNTETGAPQLNPIDGPLPKDNEPSGYAQTDCVLEAMAFLEESHPGIFENSCIETMEVVQQTRVDKLTQGRQTYDWTLNRNQPAATALANTIEVFRSNGLMANESGRLIDFLKDVMESMDREEVEITTHFQRKRRVRDNVTKKMVTQRTIGKKKQRLNKRSYLIRALTLNTMTKDAERGKLKRRAIATPGMQIRGFVYFVETLARSICEKLEQSGLPVGGNEKKAKLANVVRKMMTNSQDTEISFTITGDNTKWNENQNPRMFLAMITYITRNQPEWFRNILSIAPIMFSNKMARLGKGYMFESKSMKLRTQIPAEMLANIDLKYFNDSTRKKIEKIRPLLIDGTASLSPGMMMGMFNMLSTVLGVSILNLGQKRYTKTTYWWDGLQSSDDFALIVNAPNYAGIQAGVDRFYRTCKLLGINMSKKKSYINRTGTFEFTSFFYRYGFVANFSMELPSFGVSGINESADMSIGVTVIKNNMINNDLGPATAQMALQLFIKDYRYTYRCHRGDTQIQTRRSFEIKKLWEQTRSKAGLLVSDGGPNLYNIRNLHIPEVCLKWELMDEDYQGRLCNPLNPFVSHKEIESVNNAVMMPAHGPAKNMEYDAVATTHSWVPKRNRSILNTSQRGILEDEQMYQRCCNLFEKFFPSSSYRRPVGISSMVEAMVSRARIDARIDFESGRIKKEEFTEIMKTCSTIEELRRQK.

Residues 53-82 form a disordered region; sequence GRWTKNTETGAPQLNPIDGPLPKDNEPSGY. Short sequence motifs (nuclear localization signal) lie at residues 187-195 and 203-216; these read RKRRVRDNV and RTIGKKKQRLNKRS. The segment at 249 to 256 is promoter-binding site; it reads RGFVYFVE. One can recognise a RdRp catalytic domain in the interval 286 to 483; the sequence is VRKMMTNSQD…GINMSKKKSY (198 aa).

Belongs to the influenza viruses polymerase PB1 family. Influenza RNA polymerase is composed of three subunits: PB1, PB2 and PA. Interacts (via N-terminus) with PA (via C-terminus). Interacts (via C-terminus) with PB2 (via N-terminus); this interaction is essential for transcription initiation. Interacts (via C-terminus) with human PKP2 (via N-terminus); the interaction competitively inhibits the interaction between the RNA polymerase subunits PB1 and PB2. In terms of processing, phosphorylated by host PRKCA.

It is found in the host nucleus. The protein localises to the host cytoplasm. It carries out the reaction RNA(n) + a ribonucleoside 5'-triphosphate = RNA(n+1) + diphosphate. Its function is as follows. RNA-dependent RNA polymerase which is responsible for replication and transcription of virus RNA segments. The transcription of viral mRNAs occurs by a unique mechanism called cap-snatching. 5' methylated caps of cellular mRNAs are cleaved after 10-13 nucleotides by PA. In turn, these short capped RNAs are used as primers by PB1 for transcription of viral mRNAs. During virus replication, PB1 initiates RNA synthesis and copy vRNA into complementary RNA (cRNA) which in turn serves as a template for the production of more vRNAs. The chain is RNA-directed RNA polymerase catalytic subunit from Influenza A virus (strain A/Brazil/11/1978 H1N1).